A 261-amino-acid chain; its full sequence is Segregation and condensation protein A (261 aa).

The protein belongs to the ScpA family. Component of a cohesin-like complex composed of ScpA, ScpB and the Smc homodimer, in which ScpA and ScpB bind to the head domain of Smc. The presence of the three proteins is required for the association of the complex with DNA.

Its subcellular location is the cytoplasm. Functionally, participates in chromosomal partition during cell division. May act via the formation of a condensin-like complex containing Smc and ScpB that pull DNA away from mid-cell into both cell halves. This Desulfitobacterium hafniense (strain DSM 10664 / DCB-2) protein is Segregation and condensation protein A.